The primary structure comprises 138 residues: Phosphoribosyl-AMP cyclohydrolase (138 aa).

Residue Asp84 coordinates Mg(2+). Cys85 serves as a coordination point for Zn(2+). Asp86 and Asp88 together coordinate Mg(2+). Zn(2+) contacts are provided by Cys102 and Cys109.

The protein belongs to the PRA-CH family. Homodimer. Mg(2+) is required as a cofactor. Zn(2+) serves as cofactor.

Its subcellular location is the cytoplasm. It catalyses the reaction 1-(5-phospho-beta-D-ribosyl)-5'-AMP + H2O = 1-(5-phospho-beta-D-ribosyl)-5-[(5-phospho-beta-D-ribosylamino)methylideneamino]imidazole-4-carboxamide. The protein operates within amino-acid biosynthesis; L-histidine biosynthesis; L-histidine from 5-phospho-alpha-D-ribose 1-diphosphate: step 3/9. Catalyzes the hydrolysis of the adenine ring of phosphoribosyl-AMP. The chain is Phosphoribosyl-AMP cyclohydrolase from Burkholderia vietnamiensis (strain G4 / LMG 22486) (Burkholderia cepacia (strain R1808)).